Reading from the N-terminus, the 476-residue chain is Sulfate adenylyltransferase subunit 1 (476 aa).

The tr-type G domain maps to 24–239 (KSMLRFLTCG…VLENVDIDQK (216 aa)). Residues 33 to 40 (GSVDDGKS) form a G1 region. 33–40 (GSVDDGKS) contributes to the GTP binding site. The tract at residues 91–95 (GITID) is G2. The interval 112–115 (DTPG) is G3. GTP is bound by residues 112 to 116 (DTPGH) and 167 to 170 (NKMD). The interval 167–170 (NKMD) is G4. The interval 205-207 (SAL) is G5.

The protein belongs to the TRAFAC class translation factor GTPase superfamily. Classic translation factor GTPase family. CysN/NodQ subfamily. Heterodimer composed of CysD, the smaller subunit, and CysN.

It catalyses the reaction sulfate + ATP + H(+) = adenosine 5'-phosphosulfate + diphosphate. The protein operates within sulfur metabolism; hydrogen sulfide biosynthesis; sulfite from sulfate: step 1/3. Its function is as follows. With CysD forms the ATP sulfurylase (ATPS) that catalyzes the adenylation of sulfate producing adenosine 5'-phosphosulfate (APS) and diphosphate, the first enzymatic step in sulfur assimilation pathway. APS synthesis involves the formation of a high-energy phosphoric-sulfuric acid anhydride bond driven by GTP hydrolysis by CysN coupled to ATP hydrolysis by CysD. The protein is Sulfate adenylyltransferase subunit 1 of Vibrio atlanticus (strain LGP32) (Vibrio splendidus (strain Mel32)).